Here is a 134-residue protein sequence, read N- to C-terminus: Small ribosomal subunit protein bS16 (134 aa).

The interval 105–134 (QNERREKRLAIKTRRRQAKKAAEAEGQESA) is disordered. The segment covering 114–123 (AIKTRRRQAK) has biased composition (basic residues).

Belongs to the bacterial ribosomal protein bS16 family.

The chain is Small ribosomal subunit protein bS16 from Chlorobium phaeobacteroides (strain BS1).